Reading from the N-terminus, the 534-residue chain is Peptide chain release factor 3 (534 aa).

Positions 9-278 (SRRRTFAIIS…FFVEHAPSPQ (270 aa)) constitute a tr-type G domain. Residues 18-25 (SHPDAGKT), 86-90 (DTPGH), and 140-143 (NKLD) each bind GTP.

Belongs to the TRAFAC class translation factor GTPase superfamily. Classic translation factor GTPase family. PrfC subfamily.

Its subcellular location is the cytoplasm. Increases the formation of ribosomal termination complexes and stimulates activities of RF-1 and RF-2. It binds guanine nucleotides and has strong preference for UGA stop codons. It may interact directly with the ribosome. The stimulation of RF-1 and RF-2 is significantly reduced by GTP and GDP, but not by GMP. This chain is Peptide chain release factor 3, found in Stenotrophomonas maltophilia (strain K279a).